The chain runs to 277 residues: Bifunctional protein FolD (277 aa).

NADP(+) contacts are provided by residues 160 to 162, Ser-185, and Ile-226; that span reads GAS.

It belongs to the tetrahydrofolate dehydrogenase/cyclohydrolase family. Homodimer.

It carries out the reaction (6R)-5,10-methylene-5,6,7,8-tetrahydrofolate + NADP(+) = (6R)-5,10-methenyltetrahydrofolate + NADPH. The catalysed reaction is (6R)-5,10-methenyltetrahydrofolate + H2O = (6R)-10-formyltetrahydrofolate + H(+). The protein operates within one-carbon metabolism; tetrahydrofolate interconversion. In terms of biological role, catalyzes the oxidation of 5,10-methylenetetrahydrofolate to 5,10-methenyltetrahydrofolate and then the hydrolysis of 5,10-methenyltetrahydrofolate to 10-formyltetrahydrofolate. The protein is Bifunctional protein FolD of Ruthia magnifica subsp. Calyptogena magnifica.